We begin with the raw amino-acid sequence, 145 residues long: Methyl-coenzyme M reductase I operon protein D (145 aa).

In terms of assembly, MCR is composed of three subunits: alpha, beta, and gamma. The function of proteins C and D is not known.

This Methanothermobacter thermautotrophicus (strain ATCC 29096 / DSM 1053 / JCM 10044 / NBRC 100330 / Delta H) (Methanobacterium thermoautotrophicum) protein is Methyl-coenzyme M reductase I operon protein D (mcrD).